The following is a 249-amino-acid chain: Probable WRKY transcription factor 64 (249 aa).

A DNA-binding region (WRKY) is located at residues 97–165; sequence SPTPRPDDGF…YLGKHVCKAV (69 aa).

The protein belongs to the WRKY group III family.

It is found in the nucleus. Its function is as follows. Transcription factor. Interacts specifically with the W box (5'-(T)TGAC[CT]-3'), a frequently occurring elicitor-responsive cis-acting element. The sequence is that of Probable WRKY transcription factor 64 (WRKY64) from Arabidopsis thaliana (Mouse-ear cress).